The following is a 543-amino-acid chain: Organic anion transporter 3 (543 aa).

Topologically, residues 1–21 (MTFAELVDRVGSKGPFQLLHT) are cytoplasmic. Residues 22 to 42 (VLLGLPILGMANHNLLQIFTA) traverse the membrane as a helical segment. Over 43–124 (PTPAHHCRPP…LVCSSSKLKE (82 aa)) the chain is Extracellular. An N-linked (GlcNAc...) asparagine glycan is attached at N81. The helical transmembrane segment at 125–145 (MAQSVFMAGILVGGLVLGALS) threads the bilayer. Topologically, residues 146 to 151 (DRFGRK) are cytoplasmic. Residues 152 to 172 (PILIFSYLLLGASGSGAAFSP) traverse the membrane as a helical segment. Topologically, residues 173-181 (TFSIYAVFR) are extracellular. Residues 182 to 202 (FLCGFSISGISLSTAILNVEW) traverse the membrane as a helical segment. At 203-212 (VSTRFRAIKS) the chain is on the cytoplasmic side. The helical transmembrane segment at 213–233 (IAVGFFYTFGQFILPGLAYAI) threads the bilayer. At 234–237 (PQWR) the chain is on the extracellular side. A helical membrane pass occupies residues 238–258 (WLQLTVSVPFLTFFLLSWWLP). Residues 259–328 (ESIRWMVLSG…FRTPVLRRVT (70 aa)) lie on the Cytoplasmic side of the membrane. The helical transmembrane segment at 329 to 349 (LCLSLAWFATGFAYYSLAMGV) threads the bilayer. The Extracellular segment spans residues 350 to 355 (EEFGVN). The chain crosses the membrane as a helical span at residues 356 to 376 (LYVLQLIFGGVDVPAKFITML). At 377-388 (SISYLGRHITEG) the chain is on the cytoplasmic side. The chain crosses the membrane as a helical span at residues 389 to 409 (IVLLLAGGCILALIFVPLDLM). At 410 to 412 (TLR) the chain is on the extracellular side. Residues 413 to 433 (TVLAVFGKGCLSGSFSCLFLY) form a helical membrane-spanning segment. Residues 434 to 472 (TSELYPTVIRQTGMGASNLWARVGSMTAPLVKITGELQP) are Cytoplasmic-facing. The chain crosses the membrane as a helical span at residues 473–493 (FIPNIIFGTIALLGGSAALFL). The Extracellular portion of the chain corresponds to 494-543 (PETLNRPLPETIEDIETWSLRAKEPKPEPEAEKSSQRIPLQPCEPGPGPS). A disordered region spans residues 513-543 (LRAKEPKPEPEAEKSSQRIPLQPCEPGPGPS). Positions 514-528 (RAKEPKPEPEAEKSS) are enriched in basic and acidic residues.

The protein belongs to the major facilitator (TC 2.A.1) superfamily. Organic cation transporter (TC 2.A.1.19) family. In terms of tissue distribution, expressed in kidney.

The protein resides in the basolateral cell membrane. The catalysed reaction is estrone 3-sulfate(out) + glutarate(in) = estrone 3-sulfate(in) + glutarate(out). It catalyses the reaction estrone 3-sulfate(in) + 2-oxoglutarate(out) = estrone 3-sulfate(out) + 2-oxoglutarate(in). It carries out the reaction glutarate(in) + 2-oxoglutarate(out) = glutarate(out) + 2-oxoglutarate(in). The enzyme catalyses urate(in) + 2-oxoglutarate(out) = urate(out) + 2-oxoglutarate(in). The catalysed reaction is taurocholate(out) + glutarate(in) = taurocholate(in) + glutarate(out). It catalyses the reaction dehydroepiandrosterone 3-sulfate(out) + glutarate(in) = dehydroepiandrosterone 3-sulfate(in) + glutarate(out). It carries out the reaction prostaglandin F2alpha(out) + glutarate(in) = prostaglandin F2alpha(in) + glutarate(out). The enzyme catalyses prostaglandin F2alpha(out) + 2-oxoglutarate(in) = prostaglandin F2alpha(in) + 2-oxoglutarate(out). The catalysed reaction is (R)-carnitine(out) + 2-oxoglutarate(in) = (R)-carnitine(in) + 2-oxoglutarate(out). It catalyses the reaction glutarate(in) + (R)-carnitine(out) = glutarate(out) + (R)-carnitine(in). It carries out the reaction prostaglandin E2(out) + 2-oxoglutarate(in) = prostaglandin E2(in) + 2-oxoglutarate(out). The enzyme catalyses prostaglandin E2(out) + glutarate(in) = prostaglandin E2(in) + glutarate(out). The catalysed reaction is urate(in) + glutarate(out) = urate(out) + glutarate(in). It catalyses the reaction taurocholate(out) + 2-oxoglutarate(in) = taurocholate(in) + 2-oxoglutarate(out). It carries out the reaction dehydroepiandrosterone 3-sulfate(out) + 2-oxoglutarate(in) = dehydroepiandrosterone 3-sulfate(in) + 2-oxoglutarate(out). The enzyme catalyses kynurenate(out) + a dicarboxylate(in) = kynurenate(in) + a dicarboxylate(out). The catalysed reaction is (indol-3-yl)acetate(out) + a dicarboxylate(in) = (indol-3-yl)acetate(in) + a dicarboxylate(out). It catalyses the reaction indoxyl sulfate(out) + a dicarboxylate(in) = indoxyl sulfate(in) + a dicarboxylate(out). It carries out the reaction N-benzoylglycine(out) + a dicarboxylate(in) = N-benzoylglycine(in) + a dicarboxylate(out). The enzyme catalyses 3-carboxy-4-methyl-5-propyl-2-furanpropanoate(out) + a dicarboxylate(in) = 3-carboxy-4-methyl-5-propyl-2-furanpropanoate(in) + a dicarboxylate(out). The catalysed reaction is (6R)-L-erythro-5,6,7,8-tetrahydrobiopterin(out) + a dicarboxylate(in) = (6R)-L-erythro-5,6,7,8-tetrahydrobiopterin(in) + a dicarboxylate(out). It catalyses the reaction L-erythro-7,8-dihydrobiopterin(out) + a dicarboxylate(in) = L-erythro-7,8-dihydrobiopterin(in) + a dicarboxylate(out). It carries out the reaction L-sepiapterin(out) + a dicarboxylate(in) = L-sepiapterin(in) + a dicarboxylate(out). Functions as an organic anion/dicarboxylate exchanger that couples organic anion uptake indirectly to the sodium gradient. Transports organic anions such as estrone 3-sulfate (E1S) and urate in exchange for dicarboxylates such as glutarate or ketoglutarate (2-oxoglutarate). Plays an important role in the excretion of endogenous and exogenous organic anions, especially from the kidney and the brain. E1S transport is pH- and chloride-dependent and may also involve E1S/cGMP exchange. Responsible for the transport of prostaglandin E2 (PGE2) and prostaglandin F2(alpha) (PGF2(alpha)) in the basolateral side of the renal tubule. Involved in the transport of neuroactive tryptophan metabolites kynurenate and xanthurenate. Functions as a biopterin transporters involved in the uptake and the secretion of coenzymes tetrahydrobiopterin (BH4), dihydrobiopterin (BH2) and sepiapterin to urine, thereby determining baseline levels of blood biopterins. May be involved in the basolateral transport of steviol, a metabolite of the popular sugar substitute stevioside. May participate in the detoxification/ renal excretion of drugs and xenobiotics, such as the histamine H(2)-receptor antagonists fexofenadine and cimetidine, the antibiotic benzylpenicillin (PCG), the anionic herbicide 2,4-dichloro-phenoxyacetate (2,4-D), the diagnostic agent p-aminohippurate (PAH), the antiviral acyclovir (ACV), and the mycotoxin ochratoxin (OTA), by transporting these exogenous organic anions across the cell membrane in exchange for dicarboxylates such as 2-oxoglutarate. Contributes to the renal uptake of potent uremic toxins (indoxyl sulfate (IS), indole acetate (IA), hippurate/N-benzoylglycine (HA) and 3-carboxy-4-methyl-5-propyl-2-furanpropionate (CMPF)), pravastatin, PCG, E1S and dehydroepiandrosterone sulfate (DHEAS), and is partly involved in the renal uptake of temocaprilat (an angiotensin-converting enzyme (ACE) inhibitor). May contribute to the release of cortisol in the adrenals. Involved in one of the detoxification systems on the choroid plexus (CP), removes substrates such as E1S or taurocholate (TC), PCG, 2,4-D and PAH, from the cerebrospinal fluid (CSF) to the blood for eventual excretion in urine and bile. Also contributes to the uptake of several other organic compounds such as the prostanoids prostaglandin E(2) and prostaglandin F(2-alpha), L-carnitine, and the therapeutic drugs allopurinol, 6-mercaptopurine (6-MP) and 5-fluorouracil (5-FU). Mediates the transport of PAH, PCG, and the statins pravastatin and pitavastatin, from the cerebrum into the blood circulation across the blood-brain barrier (BBB). In summary, plays a role in the efflux of drugs and xenobiotics, helping reduce their undesired toxicological effects on the body. The chain is Organic anion transporter 3 (SLC22A8) from Sus scrofa (Pig).